A 54-amino-acid chain; its full sequence is Large ribosomal subunit protein bL33C (54 aa).

It belongs to the bacterial ribosomal protein bL33 family.

In Streptomyces griseus subsp. griseus (strain JCM 4626 / CBS 651.72 / NBRC 13350 / KCC S-0626 / ISP 5235), this protein is Large ribosomal subunit protein bL33C.